Reading from the N-terminus, the 267-residue chain is Acetylglutamate kinase (267 aa).

Substrate is bound by residues 53–54, Arg-75, and Asn-167; that span reads GG.

This sequence belongs to the acetylglutamate kinase family. ArgB subfamily.

The protein localises to the cytoplasm. The enzyme catalyses N-acetyl-L-glutamate + ATP = N-acetyl-L-glutamyl 5-phosphate + ADP. It participates in amino-acid biosynthesis; L-arginine biosynthesis; N(2)-acetyl-L-ornithine from L-glutamate: step 2/4. Its function is as follows. Catalyzes the ATP-dependent phosphorylation of N-acetyl-L-glutamate. This Shewanella pealeana (strain ATCC 700345 / ANG-SQ1) protein is Acetylglutamate kinase.